Reading from the N-terminus, the 363-residue chain is Putative transcriptional activator MSA2 (363 aa).

Positions 1–20 are disordered; sequence MVYTTPQQQQRFSSTPQSSH. Serine 157 and serine 292 each carry phosphoserine.

In terms of assembly, interacts with transcription complexes SCB-binding factor (SBF) and MCB-binding factor (MBF). Interacts with SWI4.

This chain is Putative transcriptional activator MSA2 (MSA2), found in Saccharomyces cerevisiae (strain ATCC 204508 / S288c) (Baker's yeast).